Here is a 156-residue protein sequence, read N- to C-terminus: Transcriptional regulator MraZ (156 aa).

2 consecutive SpoVT-AbrB domains span residues 5–51 (TFEK…GKAL) and 80–123 (MAKL…SREA).

It belongs to the MraZ family. In terms of assembly, forms oligomers.

Its subcellular location is the cytoplasm. It is found in the nucleoid. The polypeptide is Transcriptional regulator MraZ (Caulobacter vibrioides (strain ATCC 19089 / CIP 103742 / CB 15) (Caulobacter crescentus)).